We begin with the raw amino-acid sequence, 485 residues long: Ribulose bisphosphate carboxylase large chain (485 aa).

Substrate is bound by residues Asn-124 and Thr-174. The active-site Proton acceptor is Lys-176. Position 178 (Lys-178) interacts with substrate. The Mg(2+) site is built by Lys-202, Asp-204, and Glu-205. Lys-202 bears the N6-carboxylysine mark. Catalysis depends on His-294, which acts as the Proton acceptor. Arg-295, His-327, and Ser-379 together coordinate substrate.

The protein belongs to the RuBisCO large chain family. Type I subfamily. Heterohexadecamer of 8 large chains and 8 small chains. It depends on Mg(2+) as a cofactor.

The catalysed reaction is 2 (2R)-3-phosphoglycerate + 2 H(+) = D-ribulose 1,5-bisphosphate + CO2 + H2O. The enzyme catalyses D-ribulose 1,5-bisphosphate + O2 = 2-phosphoglycolate + (2R)-3-phosphoglycerate + 2 H(+). In terms of biological role, ruBisCO catalyzes two reactions: the carboxylation of D-ribulose 1,5-bisphosphate, the primary event in carbon dioxide fixation, as well as the oxidative fragmentation of the pentose substrate in the photorespiration process. Both reactions occur simultaneously and in competition at the same active site. The polypeptide is Ribulose bisphosphate carboxylase large chain (Rhodopseudomonas palustris (strain BisB18)).